The chain runs to 96 residues: Integration host factor subunit beta (96 aa).

Belongs to the bacterial histone-like protein family. Heterodimer of an alpha and a beta chain.

In terms of biological role, this protein is one of the two subunits of integration host factor, a specific DNA-binding protein that functions in genetic recombination as well as in transcriptional and translational control. The sequence is that of Integration host factor subunit beta from Dichelobacter nodosus (strain VCS1703A).